A 283-amino-acid polypeptide reads, in one-letter code: Acetylglutamate kinase (283 aa).

Substrate contacts are provided by residues 63-64 (GG), Arg85, and Asn178.

Belongs to the acetylglutamate kinase family. ArgB subfamily.

It is found in the cytoplasm. It carries out the reaction N-acetyl-L-glutamate + ATP = N-acetyl-L-glutamyl 5-phosphate + ADP. It functions in the pathway amino-acid biosynthesis; L-arginine biosynthesis; N(2)-acetyl-L-ornithine from L-glutamate: step 2/4. Catalyzes the ATP-dependent phosphorylation of N-acetyl-L-glutamate. This is Acetylglutamate kinase from Prochlorococcus marinus (strain MIT 9215).